The sequence spans 309 residues: Large ribosomal subunit protein mL45 (309 aa).

The protein belongs to the mitochondrion-specific ribosomal protein mL45 family. As to quaternary structure, component of the mitochondrial ribosome large subunit (39S) which comprises a 16S rRNA and about 50 distinct proteins.

Its subcellular location is the mitochondrion. Functionally, component of the mitochondrial large ribosomal subunit (mt-LSU). Within the mitochondrial ribosomes, required to direct the nascent polypeptide toward the tunnel exit and position the exit at a distance from the membrane surface. In Xenopus tropicalis (Western clawed frog), this protein is Large ribosomal subunit protein mL45 (mrpl45).